A 189-amino-acid chain; its full sequence is Putative transcription factor ovo-like protein 3 (189 aa).

Positions 1 to 20 (MPRVFLVRSRRPQPPNWSHL) are disordered. 4 consecutive C2H2-type zinc fingers follow at residues 69 to 91 (LGCP…LKCH), 97 to 119 (HVCH…MRTH), 125 to 148 (FRCG…AKVH), and 164 to 186 (HVCE…RTLH).

The protein belongs to the krueppel C2H2-type zinc-finger protein family.

It is found in the nucleus. In terms of biological role, may act as a transcription regulator. This Mus musculus (Mouse) protein is Putative transcription factor ovo-like protein 3 (Ovol3).